The chain runs to 284 residues: Trimeric intracellular cation channel type B-A (284 aa).

The Lumenal segment spans residues 1 to 15 (MESLSELSVQFSQLS). A helical membrane pass occupies residues 16 to 33 (MFPFFDMAHYVVSVMSAR). The Cytoplasmic portion of the chain corresponds to 34-46 (EQAGALDIAARSP). Residues 47–68 (MASWFSAMLYCFGGGILSSILL) traverse the membrane as a helical segment. The Lumenal segment spans residues 69–79 (AEPPIAVLSNT). A helical membrane pass occupies residues 80–99 (TNIMLASTIWYMVYYFPYDL). The Cytoplasmic portion of the chain corresponds to 100 to 102 (FYN). The helical transmembrane segment at 103 to 121 (CFFFLPIRLIIAGMKEVTR) threads the bilayer. Residues lysine 117 and arginine 121 each coordinate a 1,2-diacyl-sn-glycero-3-phospho-(1D-myo-inositol-4,5-bisphosphate). Over 122 to 137 (TWKILSGVTHAHSHYK) the chain is Lumenal. Residues 138–155 (DALLVMITIGWARGAGGG) form a helical membrane-spanning segment. At 156-177 (LISNFEQLVRGVWKPESNEFLK) the chain is on the cytoplasmic side. A helical membrane pass occupies residues 178–195 (MSYPVKVTLIGAVLFTLQ). Residues 196–206 (HGHYLPISRHN) lie on the Lumenal side of the membrane. Residues 207-224 (LMLIYTMFLVLIKVTMML) form a helical membrane-spanning segment. At 225 to 284 (THSTASPFLPLETPLQRILFGQRQKPSEVRQSASSSGAKGKPSKKTLDKDSGEQSKKKDS) the chain is on the cytoplasmic side. Residues 246–284 (QRQKPSEVRQSASSSGAKGKPSKKTLDKDSGEQSKKKDS) are disordered. The span at 269–284 (KTLDKDSGEQSKKKDS) shows a compositional bias: basic and acidic residues.

This sequence belongs to the TMEM38 family. As to quaternary structure, homotrimer; conformation seems to be controled by binding to diacylglycerol (DAG).

Its subcellular location is the endoplasmic reticulum membrane. The enzyme catalyses K(+)(in) = K(+)(out). Channel activity is activated by increased cytosolic Ca(2+) levels and blocked by luminal high Ca(2+) levels. Intracellular monovalent cation channel required for maintenance of rapid intracellular calcium release. Acts as a potassium counter-ion channel that functions in synchronization with calcium release from intracellular stores. Activated by increased cytosolic Ca(2+) levels. This Xenopus laevis (African clawed frog) protein is Trimeric intracellular cation channel type B-A (tmem38b-a).